We begin with the raw amino-acid sequence, 319 residues long: Lipoyl synthase (319 aa).

Over residues 1–12 (MVTIVDTLSNTP) the composition is skewed to polar residues. A disordered region spans residues 1–32 (MVTIVDTLSNTPLRPRHPEKANRPDSISPAKP). [4Fe-4S] cluster-binding residues include C61, C66, C72, C87, C91, C94, and S300. A Radical SAM core domain is found at 73 to 289 (WDKKHATFMI…ETVAYTKGFL (217 aa)).

Belongs to the radical SAM superfamily. Lipoyl synthase family. The cofactor is [4Fe-4S] cluster.

Its subcellular location is the cytoplasm. The enzyme catalyses [[Fe-S] cluster scaffold protein carrying a second [4Fe-4S](2+) cluster] + N(6)-octanoyl-L-lysyl-[protein] + 2 oxidized [2Fe-2S]-[ferredoxin] + 2 S-adenosyl-L-methionine + 4 H(+) = [[Fe-S] cluster scaffold protein] + N(6)-[(R)-dihydrolipoyl]-L-lysyl-[protein] + 4 Fe(3+) + 2 hydrogen sulfide + 2 5'-deoxyadenosine + 2 L-methionine + 2 reduced [2Fe-2S]-[ferredoxin]. The protein operates within protein modification; protein lipoylation via endogenous pathway; protein N(6)-(lipoyl)lysine from octanoyl-[acyl-carrier-protein]: step 2/2. In terms of biological role, catalyzes the radical-mediated insertion of two sulfur atoms into the C-6 and C-8 positions of the octanoyl moiety bound to the lipoyl domains of lipoate-dependent enzymes, thereby converting the octanoylated domains into lipoylated derivatives. The chain is Lipoyl synthase from Bradyrhizobium sp. (strain BTAi1 / ATCC BAA-1182).